The chain runs to 192 residues: Ion-translocating oxidoreductase complex subunit B (192 aa).

Residues 1–26 are hydrophobic; that stretch reads MNAIWIAVAAVSLLGLAFGAILGYAS. One can recognise a 4Fe-4S domain in the interval 32–91; that stretch reads EDDPVVEKIDEILPQSQCGQCGYPGCRPYAEAISCNGEKINRCAPGGEAVMLKIAELLNV. 12 residues coordinate [4Fe-4S] cluster: C49, C52, C57, C74, C117, C120, C123, C127, C147, C150, C153, and C157. 4Fe-4S ferredoxin-type domains are found at residues 108–137 and 138–167; these read MVAVIDENNCIGCTKCIQACPVDAIVGATR and VMHTVMSDLCTGCNLCVDPCPTHCISLQPV.

Belongs to the 4Fe4S bacterial-type ferredoxin family. RnfB subfamily. The complex is composed of six subunits: RsxA, RsxB, RsxC, RsxD, RsxE and RsxG. [4Fe-4S] cluster serves as cofactor.

Its subcellular location is the cell inner membrane. In terms of biological role, part of a membrane-bound complex that couples electron transfer with translocation of ions across the membrane. Required to maintain the reduced state of SoxR. This is Ion-translocating oxidoreductase complex subunit B from Shigella boydii serotype 4 (strain Sb227).